The chain runs to 65 residues: UPF0434 protein Mpe_A2486 (65 aa).

Belongs to the UPF0434 family.

The sequence is that of UPF0434 protein Mpe_A2486 from Methylibium petroleiphilum (strain ATCC BAA-1232 / LMG 22953 / PM1).